The chain runs to 324 residues: Testisin (324 aa).

The signal sequence occupies residues 1–21 (MGARGKTLVPLLVVVATAAMA). Positions 22–54 (LQSTYLQVDPEKPELQEPDLLSGPCGHRTIPSR) are excised as a propeptide. 2 cysteine pairs are disulfide-bonded: Cys-46–Cys-167 and Cys-80–Cys-96. In terms of domain architecture, Peptidase S1 spans 55–296 (IVGGDDAELG…HYNWIQSTMI (242 aa)). Residues His-95 and Asp-147 each act as charge relay system in the active site. Residues Asn-170, Asn-177, and Asn-210 are each glycosylated (N-linked (GlcNAc...) asparagine). 3 cysteine pairs are disulfide-bonded: Cys-181-Cys-254, Cys-214-Cys-233, and Cys-244-Cys-272. Catalysis depends on Ser-248, which acts as the Charge relay system. The N-linked (GlcNAc...) asparagine glycan is linked to Asn-283. The GPI-anchor amidated asparagine moiety is linked to residue Asn-298. Residues 299–324 (GLLRPDPVPLLLFLTLAWASSLLRPA) constitute a propeptide, removed in mature form.

This sequence belongs to the peptidase S1 family. In terms of tissue distribution, testis.

The protein resides in the cell membrane. Its function is as follows. Could regulate proteolytic events associated with testicular germ cell maturation. The polypeptide is Testisin (Prss21) (Mus musculus (Mouse)).